Consider the following 288-residue polypeptide: Bifunctional protein FolD (288 aa).

Residues 166–168 and isoleucine 232 contribute to the NADP(+) site; that span reads GAS.

It belongs to the tetrahydrofolate dehydrogenase/cyclohydrolase family. Homodimer.

It catalyses the reaction (6R)-5,10-methylene-5,6,7,8-tetrahydrofolate + NADP(+) = (6R)-5,10-methenyltetrahydrofolate + NADPH. The enzyme catalyses (6R)-5,10-methenyltetrahydrofolate + H2O = (6R)-10-formyltetrahydrofolate + H(+). It participates in one-carbon metabolism; tetrahydrofolate interconversion. Its function is as follows. Catalyzes the oxidation of 5,10-methylenetetrahydrofolate to 5,10-methenyltetrahydrofolate and then the hydrolysis of 5,10-methenyltetrahydrofolate to 10-formyltetrahydrofolate. This Yersinia pseudotuberculosis serotype O:1b (strain IP 31758) protein is Bifunctional protein FolD.